The chain runs to 541 residues: Calcium-dependent protein kinase 9 (541 aa).

The interval Met1 to Lys75 is disordered. Residue Gly2 is the site of N-myristoyl glycine attachment. Positions Pro14–Ser54 are enriched in polar residues. Residue Ser69 is modified to Phosphoserine. Positions Tyr91 to Leu349 constitute a Protein kinase domain. ATP contacts are provided by residues Leu97–Thr105 and Lys120. The active-site Proton acceptor is Asp215. The residue at position 255 (Ser255) is a Phosphoserine. The tract at residues Ala355–Ile385 is autoinhibitory domain. 4 consecutive EF-hand domains span residues Glu392–Lys427, Leu428–Leu463, Glu464–Gly499, and Asp500–Gln534. Ca(2+) contacts are provided by Asp405, Asp407, Ser409, Thr411, Glu416, Asp441, Asp443, Asn445, Ser447, Glu452, Asp477, Asp479, Ser481, Tyr483, Glu488, Asp512, Asp514, Asp516, Arg518, and Glu523.

This sequence belongs to the protein kinase superfamily. Ser/Thr protein kinase family. CDPK subfamily.

The protein localises to the cell membrane. The enzyme catalyses L-seryl-[protein] + ATP = O-phospho-L-seryl-[protein] + ADP + H(+). The catalysed reaction is L-threonyl-[protein] + ATP = O-phospho-L-threonyl-[protein] + ADP + H(+). With respect to regulation, activated by calcium. Autophosphorylation may play an important role in the regulation of the kinase activity. In terms of biological role, may play a role in signal transduction pathways that involve calcium as a second messenger. This is Calcium-dependent protein kinase 9 (CPK9) from Arabidopsis thaliana (Mouse-ear cress).